We begin with the raw amino-acid sequence, 140 residues long: ATP synthase epsilon chain (140 aa).

The protein belongs to the ATPase epsilon chain family. F-type ATPases have 2 components, CF(1) - the catalytic core - and CF(0) - the membrane proton channel. CF(1) has five subunits: alpha(3), beta(3), gamma(1), delta(1), epsilon(1). CF(0) has three main subunits: a, b and c.

The protein resides in the cell inner membrane. Functionally, produces ATP from ADP in the presence of a proton gradient across the membrane. This chain is ATP synthase epsilon chain, found in Xanthomonas oryzae pv. oryzae (strain PXO99A).